A 190-amino-acid chain; its full sequence is UPF0301 protein Pden_0436 (190 aa).

Belongs to the UPF0301 (AlgH) family.

In Paracoccus denitrificans (strain Pd 1222), this protein is UPF0301 protein Pden_0436.